Reading from the N-terminus, the 186-residue chain is Chromosome-anchoring protein RacA (186 aa).

A DNA-binding region (H-T-H motif) is located at residues 3-23 (TADAANELGVSTKTVQRWVKQ). A coiled-coil region spans residues 90–170 (ERLEERLQRF…NRREKDTAVR (81 aa)). Residues 158-186 (ESMNRREKDTAVRREEKKPKSKLKSIFSF) are disordered. Residues 160 to 175 (MNRREKDTAVRREEKK) show a composition bias toward basic and acidic residues.

This sequence belongs to the RacA family.

The protein resides in the cytoplasm. In terms of biological role, required for the formation of axial filaments and for anchoring the origin regions at the cell poles in sporulating cells, thus ensuring proper chromosome segregation in the prespore. Binds in a dispersed manner throughout the chromosome but preferentially to sites clustered in the origin portion of the chromosome, causing condensation of the chromosome and its remodeling into an elongated, anchored structure. The sequence is that of Chromosome-anchoring protein RacA from Bacillus licheniformis (strain ATCC 14580 / DSM 13 / JCM 2505 / CCUG 7422 / NBRC 12200 / NCIMB 9375 / NCTC 10341 / NRRL NRS-1264 / Gibson 46).